We begin with the raw amino-acid sequence, 137 residues long: Bacteriohemerythrin (137 aa).

Residues H21, H53, E57, H72, H76, H112, and D117 each coordinate Fe cation.

Belongs to the hemerythrin family. In terms of assembly, monomer.

In terms of biological role, oxygen-binding protein. May be involved in a storage mechanism or for delivery to oxygen-requiring enzymes. The oxygen-binding site contains two iron atoms. The polypeptide is Bacteriohemerythrin (Ralstonia nicotianae (strain ATCC BAA-1114 / GMI1000) (Ralstonia solanacearum)).